Consider the following 111-residue polypeptide: Carboxysome shell protein CcmK1 (111 aa).

Residues 4 to 90 enclose the BMC domain; it reads AVGMIETLGF…PHENLEYVLP (87 aa).

It belongs to the bacterial microcompartments protein family. CcmK subfamily. In terms of assembly, homohexamer. Interacts with full-length CcmM. Forms mixed heterohexamers of all possible stoichiometries with CcmK2, which might form dodecamers. Only very weak interactions with CcmK3 and CcmK4 were seen. Interacts with CcmN and CcmO in the carboxysome.

Its subcellular location is the carboxysome. Functionally, one of the shell proteins of the carboxysome, a polyhedral inclusion where RuBisCO (ribulose bisphosphate carboxylase, rbcL-rbcS) is sequestered. Assembles into hexamers which make sheets that form the facets of the polyhedral carboxysome. The hexamer central pore probably regulates metabolite flux. Probably the major shell protein of the carboxysome, a polyhedral inclusion where RuBisCO (ribulose bisphosphate carboxylase, rbcL-rbcS) is sequestered. The central pore probably regulates metabolite flux. Hexamers make sheets that form the facets of the carboxysome. This is Carboxysome shell protein CcmK1 from Synechocystis sp. (strain ATCC 27184 / PCC 6803 / Kazusa).